The chain runs to 251 residues: MRGNPLIHLLAISFLCILSMVYSQLCPAPCACPWTPPQCPPGVPLVLDGCGCCRVCARRLGESCDHLHVCDPSQGLVCQPGAGPSGRGAVCLFEEDDGSCEVNGRRYLDGETFKPNCRVLCRCDDGGFTCLPLCSEDVRLPSWDCPRPRRIQVPGRCCPEWVCDQAVMQPAIQPSSAQGHQLSALVTPASADGPCPNWSTAWGPCSTTCGLGIATRVSNQNRFCQLEIQRRLCLSRPCLASRSHGSWNSAF.

The first 23 residues, 1–23 (MRGNPLIHLLAISFLCILSMVYS), serve as a signal peptide directing secretion. The IGFBP N-terminal domain maps to 24–103 (QLCPAPCACP…EEDDGSCEVN (80 aa)). 6 cysteine pairs are disulfide-bonded: Cys-26–Cys-50, Cys-30–Cys-52, Cys-32–Cys-53, Cys-39–Cys-56, Cys-64–Cys-78, and Cys-70–Cys-100. The VWFC domain maps to 98–164 (GSCEVNGRRY…GRCCPEWVCD (67 aa)). The 45-residue stretch at 195–239 (CPNWSTAWGPCSTTCGLGIATRVSNQNRFCQLEIQRRLCLSRPCL) folds into the TSP type-1 domain. N-linked (GlcNAc...) asparagine glycosylation is present at Asn-197.

The protein belongs to the CCN family.

The protein resides in the secreted. Its function is as follows. May play an important role in modulating bone turnover. Promotes the adhesion of osteoblast cells and inhibits the binding of fibrinogen to integrin receptors. In addition, inhibits osteocalcin production. In Mus musculus (Mouse), this protein is CCN family member 5 (Ccn5).